The primary structure comprises 408 residues: Beta-ureidopropionase (408 aa).

In terms of domain architecture, CN hydrolase spans 90–360; that stretch reads VRVGLIQNSI…DGLLISDMDL (271 aa). The active-site Proton acceptor is the glutamate 137. The active-site Proton donor is the lysine 212. The active-site Nucleophile is cysteine 249.

The protein belongs to the carbon-nitrogen hydrolase superfamily. BUP family. In terms of assembly, homodimer, homotetramer, homooctamer; can also form higher homooligomers.

The protein localises to the cytoplasm. It carries out the reaction 3-(carbamoylamino)propanoate + H2O + 2 H(+) = beta-alanine + NH4(+) + CO2. The catalysed reaction is 3-(carbamoylamino)-2-methylpropanoate + H2O + 2 H(+) = (R)-3-amino-2-methylpropanoate + NH4(+) + CO2. It participates in amino-acid biosynthesis; beta-alanine biosynthesis. Its function is as follows. Catalyzes a late step in pyrimidine degradation. Converts N-carbamoyl-beta-aminoisobutyrate and N-carbamoyl-beta-alanine (3-ureidopropanoate) to, respectively, beta-aminoisobutyrate and beta-alanine, ammonia and carbon dioxide. Involved in the recycling of nitrogen from nucleobases to general nitrogen metabolism. The polypeptide is Beta-ureidopropionase (Arabidopsis thaliana (Mouse-ear cress)).